The sequence spans 128 residues: MADITKQDVIDFIANMTVLELSELITELEEKFGVSAAAPVAMMAGGMPAGGDAGAAEEKTEFDVVLLTSGDKKIQVIKEVRAITGLGLKEAKALVEEAPKPVKEGVPKDEAEKLKAQLEGAGAQVEIK.

It belongs to the bacterial ribosomal protein bL12 family. Homodimer. Part of the ribosomal stalk of the 50S ribosomal subunit. Forms a multimeric L10(L12)X complex, where L10 forms an elongated spine to which 2 to 4 L12 dimers bind in a sequential fashion. Binds GTP-bound translation factors.

Functionally, forms part of the ribosomal stalk which helps the ribosome interact with GTP-bound translation factors. Is thus essential for accurate translation. The sequence is that of Large ribosomal subunit protein bL12 from Desulfosudis oleivorans (strain DSM 6200 / JCM 39069 / Hxd3) (Desulfococcus oleovorans).